Consider the following 726-residue polypeptide: Catalase-peroxidase (726 aa).

Residues Met-1–Thr-33 form a disordered region. The tryptophyl-tyrosyl-methioninium (Trp-Tyr) (with M-252) cross-link spans Trp-105–Tyr-226. His-106 functions as the Proton acceptor in the catalytic mechanism. Residues Tyr-226 to Met-252 constitute a cross-link (tryptophyl-tyrosyl-methioninium (Tyr-Met) (with W-105)). Position 267 (His-267) interacts with heme b.

This sequence belongs to the peroxidase family. Peroxidase/catalase subfamily. As to quaternary structure, homodimer or homotetramer. The cofactor is heme b. In terms of processing, formation of the three residue Trp-Tyr-Met cross-link is important for the catalase, but not the peroxidase activity of the enzyme.

It carries out the reaction H2O2 + AH2 = A + 2 H2O. The catalysed reaction is 2 H2O2 = O2 + 2 H2O. Functionally, bifunctional enzyme with both catalase and broad-spectrum peroxidase activity. This Shigella boydii serotype 18 (strain CDC 3083-94 / BS512) protein is Catalase-peroxidase.